Reading from the N-terminus, the 490-residue chain is Betaine aldehyde dehydrogenase (490 aa).

Residues Thr-26, Ile-27, and Asp-93 each coordinate K(+). 150–152 (GAW) is a binding site for NAD(+). Lys-162 acts as the Charge relay system in catalysis. 176 to 179 (KPSE) contacts NAD(+). Val-180 contributes to the K(+) binding site. 230–233 (GVAS) serves as a coordination point for NAD(+). Residue Leu-246 coordinates K(+). Glu-252 functions as the Proton acceptor in the catalytic mechanism. Residues Gly-254, Cys-286, and Glu-387 each contribute to the NAD(+) site. The Nucleophile role is filled by Cys-286. Position 286 is a cysteine sulfenic acid (-SOH) (Cys-286). The K(+) site is built by Lys-457 and Gly-460. Glu-464 acts as the Charge relay system in catalysis.

Belongs to the aldehyde dehydrogenase family. In terms of assembly, dimer of dimers. K(+) serves as cofactor.

The catalysed reaction is betaine aldehyde + NAD(+) + H2O = glycine betaine + NADH + 2 H(+). It participates in amine and polyamine biosynthesis; betaine biosynthesis via choline pathway; betaine from betaine aldehyde: step 1/1. Its function is as follows. Involved in the biosynthesis of the osmoprotectant glycine betaine. Catalyzes the irreversible oxidation of betaine aldehyde to the corresponding acid. This is Betaine aldehyde dehydrogenase from Escherichia coli (strain K12 / DH10B).